The following is a 321-amino-acid chain: Homoserine O-acetyltransferase (321 aa).

Cys-142 serves as the catalytic Acyl-thioester intermediate. Residues Lys-163 and Ser-192 each coordinate substrate. Residue His-235 is the Proton acceptor of the active site. Glu-237 is a catalytic residue. Arg-249 is a substrate binding site.

The protein belongs to the MetA family.

The protein localises to the cytoplasm. It carries out the reaction L-homoserine + acetyl-CoA = O-acetyl-L-homoserine + CoA. Its pathway is amino-acid biosynthesis; L-methionine biosynthesis via de novo pathway; O-acetyl-L-homoserine from L-homoserine: step 1/1. Functionally, transfers an acetyl group from acetyl-CoA to L-homoserine, forming acetyl-L-homoserine. This chain is Homoserine O-acetyltransferase, found in Lactococcus lactis subsp. lactis (strain IL1403) (Streptococcus lactis).